We begin with the raw amino-acid sequence, 262 residues long: Small ribosomal subunit protein uS2 (262 aa).

The segment at 228–262 (VSNEEVAAEQNIDLDESKEATEAETTEENTSVESN) is disordered.

This sequence belongs to the universal ribosomal protein uS2 family.

The polypeptide is Small ribosomal subunit protein uS2 (Staphylococcus saprophyticus subsp. saprophyticus (strain ATCC 15305 / DSM 20229 / NCIMB 8711 / NCTC 7292 / S-41)).